Here is a 464-residue protein sequence, read N- to C-terminus: Delta(5) fatty acid desaturase A (464 aa).

The Cytochrome b5 heme-binding domain occupies 13-90 (GKQYSWSELA…LKNYEIGYIS (78 aa)). Heme contacts are provided by histidine 48 and histidine 71. The next 2 membrane-spanning stretches (helical) occupy residues 125–145 (AVSI…TYYL) and 153–173 (FYLN…FSMH). The short motif at 176–180 (HDSCH) is the Histidine box-1 element. A Histidine box-2 motif is present at residues 212-217 (HVIGHH). A helical membrane pass occupies residues 318 to 338 (FTDLICYFLIAEFVFGWYLTI). The short motif at 396-400 (QVVHH) is the Histidine box-3 element.

It belongs to the fatty acid desaturase type 1 family. The cofactor is Fe cation.

Its subcellular location is the membrane. In terms of biological role, specific for desaturation of the 5 position in C16 and C18 fatty acids. The chain is Delta(5) fatty acid desaturase A (fadA) from Dictyostelium discoideum (Social amoeba).